The following is a 244-amino-acid chain: Neurogenin-1 (244 aa).

2 disordered regions span residues 1 to 27 (MPAP…SSFL) and 39 to 82 (LAST…ARVR). Residues 10–27 (SDLDCSSSNSSSDLSSFL) show a composition bias toward low complexity. Residues 93-145 (SRRVKANDRERNRMHNLNAALDALRSVLPSFPDDTKLTKIETLRFAYNYIWAL) enclose the bHLH domain.

Efficient DNA binding requires dimerization with another bHLH protein. In terms of tissue distribution, expression restricted to the embryonic nervous system.

It localises to the nucleus. In terms of biological role, acts as a transcriptional regulator. Involved in the initiation of neuronal differentiation. Activates transcription by binding to the E box (5'-CANNTG-3'). Associates with chromatin to enhancer regulatory elements in genes encoding key transcriptional regulators of neurogenesis. The sequence is that of Neurogenin-1 (Neurog1) from Mus musculus (Mouse).